We begin with the raw amino-acid sequence, 270 residues long: Phosphonates import ATP-binding protein PhnC 2 (270 aa).

Residues 2–245 (LVVEGLTCRF…IARELYDLEA (244 aa)) enclose the ABC transporter domain. Residue 34-41 (GRSGAGKS) coordinates ATP.

Belongs to the ABC transporter superfamily. Phosphonates importer (TC 3.A.1.9.1) family. In terms of assembly, the complex is composed of two ATP-binding proteins (PhnC), two transmembrane proteins (PhnE) and a solute-binding protein (PhnD).

Its subcellular location is the cell inner membrane. It carries out the reaction phosphonate(out) + ATP + H2O = phosphonate(in) + ADP + phosphate + H(+). Part of the ABC transporter complex PhnCDE involved in phosphonates import. Responsible for energy coupling to the transport system. This Rhodopseudomonas palustris (strain BisA53) protein is Phosphonates import ATP-binding protein PhnC 2.